The chain runs to 138 residues: Basic phospholipase A2 chain HDP-1P (138 aa).

A signal peptide spans Met1–Gly16. Intrachain disulfides connect Cys42/Cys131, Cys44/Cys60, Cys59/Cys111, Cys65/Cys138, Cys66/Cys104, Cys73/Cys97, and Cys91/Cys102. Residues Tyr43, Gly45, and Gly47 each coordinate Ca(2+). The active site involves His63. Asp64 provides a ligand contact to Ca(2+). Asp105 is an active-site residue.

In terms of assembly, heterodimer; non-covalently linked. The toxic basic protein has phospholipase A2 activity (chain HDP-1P) and the non-toxic acidic protein functions as its inhibitor (chain HPD-1I (AC A4VBF0)). Requires Ca(2+) as cofactor. Expressed by the venom gland.

The protein resides in the secreted. It carries out the reaction a 1,2-diacyl-sn-glycero-3-phosphocholine + H2O = a 1-acyl-sn-glycero-3-phosphocholine + a fatty acid + H(+). With respect to regulation, enzymatic activity and neurotoxicity are inhibited by Triton X-100, which has been determined to be located in the center of the hydrophobic channel of the enzyme. Its function is as follows. Heterodimer: shows the same activities as the monomer, but with a lower potency. Functionally, monomer: snake venom phospholipase A2 (PLA2) that shows presynaptic neurotoxicity, anticoagulant activity and that weakly inhibits ADP-induced platelet aggregation. Inhibits exocytosis in pancreatic beta cells, confirming it can act presynaptically in inhibiting the exocytosis of neurotransmitters in neurons. PLA2 catalyzes the calcium-dependent hydrolysis of the 2-acyl groups in 3-sn-phosphoglycerides. This is Basic phospholipase A2 chain HDP-1P from Vipera nikolskii (Nikolsky's adder).